Consider the following 252-residue polypeptide: Large ribosomal subunit protein uL4 (252 aa).

It belongs to the universal ribosomal protein uL4 family. In terms of assembly, part of the 50S ribosomal subunit.

One of the primary rRNA binding proteins, this protein initially binds near the 5'-end of the 23S rRNA. It is important during the early stages of 50S assembly. It makes multiple contacts with different domains of the 23S rRNA in the assembled 50S subunit and ribosome. Functionally, forms part of the polypeptide exit tunnel. In Methanococcus aeolicus (strain ATCC BAA-1280 / DSM 17508 / OCM 812 / Nankai-3), this protein is Large ribosomal subunit protein uL4.